The sequence spans 362 residues: Putative F-box protein At3g25750 (362 aa).

In terms of domain architecture, F-box spans 4 to 52 (TEWSDLPEELLDLIANRYSSNIDVLRIRSTCKSWRSAVAMSKERLQFRF).

In Arabidopsis thaliana (Mouse-ear cress), this protein is Putative F-box protein At3g25750.